We begin with the raw amino-acid sequence, 489 residues long: N-succinylglutamate 5-semialdehyde dehydrogenase (489 aa).

223-228 (GSASTG) provides a ligand contact to NAD(+). Residues E246 and C280 contribute to the active site.

This sequence belongs to the aldehyde dehydrogenase family. AstD subfamily.

It catalyses the reaction N-succinyl-L-glutamate 5-semialdehyde + NAD(+) + H2O = N-succinyl-L-glutamate + NADH + 2 H(+). It participates in amino-acid degradation; L-arginine degradation via AST pathway; L-glutamate and succinate from L-arginine: step 4/5. Its function is as follows. Catalyzes the NAD-dependent reduction of succinylglutamate semialdehyde into succinylglutamate. The chain is N-succinylglutamate 5-semialdehyde dehydrogenase from Acinetobacter baylyi (strain ATCC 33305 / BD413 / ADP1).